Reading from the N-terminus, the 62-residue chain is Large ribosomal subunit protein bL33 (62 aa).

Belongs to the bacterial ribosomal protein bL33 family.

The protein is Large ribosomal subunit protein bL33 of Bacteroides fragilis (strain ATCC 25285 / DSM 2151 / CCUG 4856 / JCM 11019 / LMG 10263 / NCTC 9343 / Onslow / VPI 2553 / EN-2).